Consider the following 83-residue polypeptide: MAHKRSSGAGRNGRDSNPKYLGVKRGENAFVRAGTIIIRQRGTKIHPGQNVGMGRDFTLYALIDGKVHFETRNNRKYVSVYAE.

The interval 1–21 is disordered; sequence MAHKRSSGAGRNGRDSNPKYL.

The protein belongs to the bacterial ribosomal protein bL27 family.

This is Large ribosomal subunit protein bL27 from Kosmotoga olearia (strain ATCC BAA-1733 / DSM 21960 / TBF 19.5.1).